Reading from the N-terminus, the 708-residue chain is Leukotoxin translocation ATP-binding protein LktB (708 aa).

The Peptidase C39 domain occupies 1–126 (MEANHQRNDL…ACYQGQLILV (126 aa)). Positions 155 to 437 (FLETLIVSIF…LAQLWQDFQQ (283 aa)) constitute an ABC transmembrane type-1 domain. 5 helical membrane passes run 159 to 179 (LIVS…FQVV), 192 to 212 (LNII…LSGL), 270 to 290 (ALTS…MWYY), 296 to 316 (LVIL…SPIL), and 389 to 409 (VMVI…LSIG). One can recognise an ABC transporter domain in the interval 469 to 704 (ISFKNIRFRY…SNGLYSYLHQ (236 aa)). 503 to 510 (GRSGSGKS) is a binding site for ATP.

It belongs to the ABC transporter superfamily. Protein-1 exporter (TC 3.A.1.109) family. In terms of assembly, homodimer.

It localises to the cell inner membrane. It catalyses the reaction ATP + H2O + proteinSide 1 = ADP + phosphate + proteinSide 2.. Its function is as follows. Part of the ABC transporter complex LktBD involved in leukotoxin export. Transmembrane domains (TMD) form a pore in the inner membrane and the ATP-binding domain (NBD) is responsible for energy generation. This is Leukotoxin translocation ATP-binding protein LktB (lktB) from Mannheimia haemolytica (Pasteurella haemolytica).